The following is a 555-amino-acid chain: Glutamine--tRNA ligase (555 aa).

A 'HIGH' region motif is present at residues 34-44 (PEPNGYLHIGH). Residues 35–37 (EPN) and 41–47 (HIGHAKS) each bind ATP. L-glutamine is bound by residues Asp67 and Tyr212. ATP is bound by residues Thr231, 261–262 (RL), and 269–271 (MSK). The 'KMSKS' region signature appears at 268–272 (IMSKR).

This sequence belongs to the class-I aminoacyl-tRNA synthetase family. As to quaternary structure, monomer.

It localises to the cytoplasm. The enzyme catalyses tRNA(Gln) + L-glutamine + ATP = L-glutaminyl-tRNA(Gln) + AMP + diphosphate. This Erwinia tasmaniensis (strain DSM 17950 / CFBP 7177 / CIP 109463 / NCPPB 4357 / Et1/99) protein is Glutamine--tRNA ligase.